The primary structure comprises 43 residues: METATFITIFISCLLVSVTGYALYTAFGKPSKQLRDPFEEHED.

The helical transmembrane segment at 5–27 (TFITIFISCLLVSVTGYALYTAF) threads the bilayer.

Belongs to the PsbN family.

The protein localises to the plastid. It localises to the chloroplast thylakoid membrane. Its function is as follows. May play a role in photosystem I and II biogenesis. In Chara vulgaris (Common stonewort), this protein is Protein PsbN.